The primary structure comprises 526 residues: Bifunctional purine biosynthesis protein PurH (526 aa).

Positions 1 to 148 constitute an MGS-like domain; sequence MQRPIIIRRA…KNYSNVVVVV (148 aa).

This sequence belongs to the PurH family.

The catalysed reaction is (6R)-10-formyltetrahydrofolate + 5-amino-1-(5-phospho-beta-D-ribosyl)imidazole-4-carboxamide = 5-formamido-1-(5-phospho-D-ribosyl)imidazole-4-carboxamide + (6S)-5,6,7,8-tetrahydrofolate. It carries out the reaction IMP + H2O = 5-formamido-1-(5-phospho-D-ribosyl)imidazole-4-carboxamide. It participates in purine metabolism; IMP biosynthesis via de novo pathway; 5-formamido-1-(5-phospho-D-ribosyl)imidazole-4-carboxamide from 5-amino-1-(5-phospho-D-ribosyl)imidazole-4-carboxamide (10-formyl THF route): step 1/1. The protein operates within purine metabolism; IMP biosynthesis via de novo pathway; IMP from 5-formamido-1-(5-phospho-D-ribosyl)imidazole-4-carboxamide: step 1/1. The protein is Bifunctional purine biosynthesis protein PurH of Baumannia cicadellinicola subsp. Homalodisca coagulata.